The primary structure comprises 618 residues: MVSPRMSGLLSQTVILALIFLPQTRPAGVFELQIHSFGPGPGPGAPRSPCSARLPCRLFFRVCLKPGLSEEAAESPCALGAALSARGPVYTEQPGAPAPDLPLPDGLLQVPFRDAWPGTFSFIIETWREELGDQIGGPAWSLLARVAGRRRLAAGGPWARDIQRAGAWELRFSYRARCEPPAVGTACTRLCRPRSAPSRCGPGLRPCAPLEDECEAPLVCRAGCSPEHGFCEQPGECRCLEGWTGPLCTVPVSTSSCLSPRGPSSATTGCLVPGPGPCDGNPCANGGSCSETPRSFECTCPRGFYGLRCEVSGVTCADGPCFNGGLCVGGADPDSAYICHCPPGFQGSNCEKRVDRCSLQPCRNGGLCLDLGHALRCRCRAGFAGPRCEHDLDDCAGRACANGGTCVEGGGAHRCSCALGFGGRDCRERADPCAARPCAHGGRCYAHFSGLVCACAPGYMGARCEFPVHPDGASALPAAPPGLRPGDPQRYLLPPALGLLVAAGVAGAALLLVHVRRRGHSQDAGSRLLAGTPEPSVHALPDALNNLRTQEGSGDGPSSSVDWNRPEDVDPQGIYVISAPSIYAREVATPLFPPLHTGRAGQRQHLLFPYPSSILSVK.

Positions 1–26 (MVSPRMSGLLSQTVILALIFLPQTRP) are cleaved as a signal peptide. Over 27–492 (AGVFELQIHS…LRPGDPQRYL (466 aa)) the chain is Extracellular. A DSL domain is found at 176 to 215 (ARCEPPAVGTACTRLCRPRSAPSRCGPGLRPCAPLEDECE). EGF-like domains are found at residues 216 to 249 (APLV…PLCT), 274 to 310 (GPGP…LRCE), 312 to 351 (SGVT…SNCE), 353 to 389 (RVDR…PRCE), 391 to 427 (DLDD…RDCR), and 429 to 465 (RADP…ARCE). Cystine bridges form between cysteine 220–cysteine 231, cysteine 224–cysteine 237, cysteine 239–cysteine 248, cysteine 278–cysteine 289, cysteine 283–cysteine 298, cysteine 300–cysteine 309, cysteine 316–cysteine 327, cysteine 321–cysteine 339, cysteine 341–cysteine 350, cysteine 357–cysteine 368, cysteine 362–cysteine 377, cysteine 379–cysteine 388, cysteine 395–cysteine 406, cysteine 400–cysteine 415, cysteine 417–cysteine 426, cysteine 433–cysteine 444, cysteine 438–cysteine 453, and cysteine 455–cysteine 464. The helical transmembrane segment at 493-513 (LPPALGLLVAAGVAGAALLLV) threads the bilayer. Residues 514 to 618 (HVRRRGHSQD…PYPSSILSVK (105 aa)) lie on the Cytoplasmic side of the membrane. Over residues 546 to 562 (NLRTQEGSGDGPSSSVD) the composition is skewed to polar residues. A disordered region spans residues 546-566 (NLRTQEGSGDGPSSSVDWNRP).

In terms of assembly, can bind and activate Notch-1 or another Notch receptor. In terms of processing, ubiquitinated by MIB (MIB1 or MIB2), leading to its endocytosis and subsequent degradation.

It is found in the membrane. In terms of biological role, inhibits primary neurogenesis. May be required to divert neurons along a specific differentiation pathway. Plays a role in the formation of somite boundaries during segmentation of the paraxial mesoderm. The sequence is that of Delta-like protein 3 (DLL3) from Homo sapiens (Human).